The chain runs to 185 residues: Ribosome-recycling factor (185 aa).

Belongs to the RRF family.

The protein resides in the cytoplasm. Its function is as follows. Responsible for the release of ribosomes from messenger RNA at the termination of protein biosynthesis. May increase the efficiency of translation by recycling ribosomes from one round of translation to another. In Xanthomonas campestris pv. campestris (strain 8004), this protein is Ribosome-recycling factor.